We begin with the raw amino-acid sequence, 423 residues long: G2/mitotic-specific cyclin-B1 (423 aa).

Ser-116 carries the post-translational modification Phosphoserine; by CDK1. The residue at position 118 (Ser-118) is a Phosphoserine. Ser-123 carries the phosphoserine; by PLK1 modification. Phosphoserine is present on Ser-137. Interaction with CDK2 stretches follow at residues 159 to 167 and 248 to 251; these read EYVKDIYAY and YEEM. Thr-311 carries the post-translational modification Phosphothreonine.

The protein belongs to the cyclin family. Cyclin AB subfamily. In terms of assembly, interacts with the CDC2 protein kinase to form a serine/threonine kinase holoenzyme complex also known as maturation promoting factor (MPF). The cyclin subunit imparts substrate specificity to the complex. Binds HEI10. Interacts with catalytically active RALBP1 and CDC2 during mitosis to form an endocytotic complex during interphase. Interacts with CCNF; interaction is required for nuclear localization. Interacts with CDK5RAP3. Interacts with RFPL4A and UBE2A. Interacts with INCA1. Ubiquitinated by the SCF(NIPA) complex during interphase, leading to its destruction. Deubiquitinated by USP22 during G2/M phase. In terms of processing, phosphorylated by PLK1 at Ser-123 on centrosomes during prophase: phosphorylation by PLK1 does not cause nuclear import. Phosphorylation at Ser-137 was also reported to be mediated by PLK1 but Ser-123 seems to be the primary phosphorylation site.

The protein resides in the cytoplasm. It localises to the nucleus. It is found in the cytoskeleton. The protein localises to the microtubule organizing center. Its subcellular location is the centrosome. Essential for the control of the cell cycle at the G2/M (mitosis) transition. The sequence is that of G2/mitotic-specific cyclin-B1 (Ccnb1) from Rattus norvegicus (Rat).